Here is a 514-residue protein sequence, read N- to C-terminus: MKILIAVVFGCLLIILSFSKYFNDQLLDATTKDIKESERPVDKLIGGLLTADFDEGSCLSRYHKYFLYRKPSPYMPSEYLVSELRSYEMLHKRCGPDTKAYKEATEKLSRDEYYASESNGECRYIVWLARDGLGNRLITLASVFLYAILTERIILVDNRKDVSDLLCEPFPGTSWLLPLDFPMLNYTYAYGYNKEYPRCYGTMLENHAINSTSIPPHLYLHNIHDSRDSDKLFFCQKDQSFIDKVPWLIIQTNAYFVPSLWLNPTFQTKLVKLFPQKETVFHHLARYLFHPTNEVWDMVTKYYDAHLSNADERLGIQIRVFGKPSGYFKHVMDQVVACTQREKLLPEFEEESKVNISKPPKLKVVLVASLYPEYSVNLTNMFLARPSSTGEIIEVYQPSAERVQQTDKKSHDQKALAEMYLLSLTDNIVTSGWSTFGYVSYSLGGLKPWLLYQPVNFTTPNPPCVRSKSMEPCYHTPPSHGCEADWGTNSGKILPFVRHCEDMMYGGLKLYDDF.

Residues N185, N210, N355, N377, and N456 are each glycosylated (N-linked (GlcNAc...) asparagine).

Belongs to the glycosyltransferase 37 family. In terms of tissue distribution, expressed in root, leaves, stems and seedlings.

It is found in the golgi apparatus. The protein operates within protein modification; protein glycosylation. May be involved in cell wall biosynthesis. May act as a fucosyltransferase. The protein is Putative fucosyltransferase 10 (FUT10) of Arabidopsis thaliana (Mouse-ear cress).